Reading from the N-terminus, the 91-residue chain is Large ribosomal subunit protein bL27 (91 aa).

The segment at 1 to 22 (MAHKKAGGSSRNGRDSAGRRLG) is disordered.

It belongs to the bacterial ribosomal protein bL27 family.

The protein is Large ribosomal subunit protein bL27 of Methylocella silvestris (strain DSM 15510 / CIP 108128 / LMG 27833 / NCIMB 13906 / BL2).